The following is a 299-amino-acid chain: Putative arsenical pump-driving ATPase 2 (299 aa).

Residue 8–15 (GKGGVGKT) participates in ATP binding.

Belongs to the arsA ATPase family.

The catalysed reaction is arsenite(in) + ATP + H2O = arsenite(out) + ADP + phosphate + H(+). In terms of biological role, anion-transporting ATPase. Catalyzes the extrusion of arsenite. The sequence is that of Putative arsenical pump-driving ATPase 2 (arsA2) from Aquifex aeolicus (strain VF5).